The following is a 310-amino-acid chain: tRNA dimethylallyltransferase (310 aa).

An ATP-binding site is contributed by 14-21; that stretch reads GPTASGKS. Substrate is bound at residue 16–21; the sequence is TASGKS. Interaction with substrate tRNA stretches follow at residues 39–42 and 163–167; these read DSMQ and QRIVR.

This sequence belongs to the IPP transferase family. Monomer. Requires Mg(2+) as cofactor.

It carries out the reaction adenosine(37) in tRNA + dimethylallyl diphosphate = N(6)-dimethylallyladenosine(37) in tRNA + diphosphate. Its function is as follows. Catalyzes the transfer of a dimethylallyl group onto the adenine at position 37 in tRNAs that read codons beginning with uridine, leading to the formation of N6-(dimethylallyl)adenosine (i(6)A). The sequence is that of tRNA dimethylallyltransferase from Brucella melitensis biotype 2 (strain ATCC 23457).